The chain runs to 37 residues: Large ribosomal subunit protein bL36A (37 aa).

It belongs to the bacterial ribosomal protein bL36 family.

This Actinobacillus pleuropneumoniae serotype 5b (strain L20) protein is Large ribosomal subunit protein bL36A.